A 182-amino-acid chain; its full sequence is Putative manganese efflux pump MntP (182 aa).

Helical transmembrane passes span 6–26 (LIPL…VSLG), 37–57 (ILYI…IGMV), 72–92 (FAGA…SILE), 101–121 (IGIS…SVGL), 131–151 (IITI…GLLL), and 162–182 (YGEI…LFPI).

This sequence belongs to the MntP (TC 9.B.29) family.

It localises to the cell membrane. Functionally, probably functions as a manganese efflux pump. The polypeptide is Putative manganese efflux pump MntP (Bacillus mycoides (strain KBAB4) (Bacillus weihenstephanensis)).